Here is a 573-residue protein sequence, read N- to C-terminus: Patellin-1 (573 aa).

2 disordered regions span residues 1–74 and 111–202; these read MAQE…SVKE and REFT…DGTK. Ala2 is modified (N-acetylalanine). Positions 18–28 are enriched in basic and acidic residues; that stretch reads VKEKPITDKEV. Thr29 is subject to Phosphothreonine. Positions 35–74 are enriched in basic and acidic residues; sequence AEKEEVAAPVSDEKAVPEKEVTPEKEAPAAEAEKSVSVKE. Positions 89–157 form a coiled coil; that stretch reads AEEVQKKALE…TTEVKVEEEK (69 aa). At Thr118 the chain carries Phosphothreonine. Composition is skewed to basic and acidic residues over residues 120–169 and 176–190; these read VKEE…EKSS and TKSEEKPEEKAEVTT. Phosphoserine is present on Ser195. Residue Lys285 forms a Glycyl lysine isopeptide (Lys-Gly) (interchain with G-Cter in ubiquitin) linkage. In terms of domain architecture, CRAL-TRIO spans 295 to 468; the sequence is SGEEVSEFEK…KYGGLSKDTP (174 aa). Positions 471 to 572 constitute a GOLD domain; that stretch reads EETITEAIVK…KKKVLYRFKT (102 aa).

The protein belongs to the patellin family. In terms of assembly, interacts with the deubiquitinating enzyme AMSH3. As to expression, expressed ubiquitously with higher levels in expanding roots and leaves (at protein level).

It localises to the membrane. The protein resides in the cytoplasm. Its function is as follows. Carrier protein that may be involved in membrane-trafficking events associated with cell plate formation during cytokinesis. Binds to some hydrophobic molecules and promotes their transfer between the different cellular sites. Binds to phosphoinositides with a preference for PtdIns(5)P, PtdIns(4,5)P2 and PtdIns(3)P. The polypeptide is Patellin-1 (PATL1) (Arabidopsis thaliana (Mouse-ear cress)).